The following is a 90-amino-acid chain: UPF0298 protein SSU05_1549 (90 aa).

The protein belongs to the UPF0298 family.

The protein resides in the cytoplasm. The protein is UPF0298 protein SSU05_1549 of Streptococcus suis (strain 05ZYH33).